The sequence spans 242 residues: ATP synthase subunit a (242 aa).

6 consecutive transmembrane segments (helical) span residues 29 to 49 (SSIY…LAFY), 84 to 104 (FIPL…LGMT), 114 to 134 (IIVT…VGFV), 140 to 160 (FLTL…MIVI), 181 to 201 (MAGH…MIYL), and 203 to 223 (FLPI…AILQ).

It belongs to the ATPase A chain family. In terms of assembly, F-type ATPases have 2 components, CF(1) - the catalytic core - and CF(0) - the membrane proton channel. CF(1) has five subunits: alpha(3), beta(3), gamma(1), delta(1), epsilon(1). CF(0) has three main subunits: a(1), b(2) and c(9-12). The alpha and beta chains form an alternating ring which encloses part of the gamma chain. CF(1) is attached to CF(0) by a central stalk formed by the gamma and epsilon chains, while a peripheral stalk is formed by the delta and b chains.

It localises to the cell membrane. Key component of the proton channel; it plays a direct role in the translocation of protons across the membrane. In Rickettsia africae (strain ESF-5), this protein is ATP synthase subunit a.